Here is a 318-residue protein sequence, read N- to C-terminus: Biotin synthase (318 aa).

The 221-residue stretch at 40-260 (DDIQKASLLS…VATARIIMPL (221 aa)) folds into the Radical SAM core domain. Positions 55, 59, and 62 each coordinate [4Fe-4S] cluster. 4 residues coordinate [2Fe-2S] cluster: Cys100, Cys132, Cys192, and Arg264.

It belongs to the radical SAM superfamily. Biotin synthase family. As to quaternary structure, homodimer. It depends on [4Fe-4S] cluster as a cofactor. The cofactor is [2Fe-2S] cluster.

It catalyses the reaction (4R,5S)-dethiobiotin + (sulfur carrier)-SH + 2 reduced [2Fe-2S]-[ferredoxin] + 2 S-adenosyl-L-methionine = (sulfur carrier)-H + biotin + 2 5'-deoxyadenosine + 2 L-methionine + 2 oxidized [2Fe-2S]-[ferredoxin]. The protein operates within cofactor biosynthesis; biotin biosynthesis; biotin from 7,8-diaminononanoate: step 2/2. Catalyzes the conversion of dethiobiotin (DTB) to biotin by the insertion of a sulfur atom into dethiobiotin via a radical-based mechanism. In Ruegeria pomeroyi (strain ATCC 700808 / DSM 15171 / DSS-3) (Silicibacter pomeroyi), this protein is Biotin synthase.